Consider the following 494-residue polypeptide: Serine/arginine-rich splicing factor 4 (494 aa).

Positions 2–72 (PRVYIGRLSY…ERVIVEHARG (71 aa)) constitute an RRM 1 domain. 2 disordered regions span residues 72-95 (GPRR…GRDK) and 169-494 (KIRL…HSRS). Phosphoserine occurs at positions 78 and 84. In terms of domain architecture, RRM 2 spans 104-177 (YRLIVENLSS…RKIRLVEDKP (74 aa)). 2 stretches are compositionally biased toward basic residues: residues 179 to 206 (SRRR…KSRS) and 214 to 246 (SHSK…KKEK). Positions 247-256 (SRSPSKEKSR) are enriched in basic and acidic residues. A compositionally biased stretch (basic residues) spans 257-267 (SRSHSAGKSRS). Residues 268 to 278 (KSKDQAEEKIQ) are compositionally biased toward basic and acidic residues. The segment covering 286-302 (PKSRSPSRHKSKSKSRS) has biased composition (basic residues). S288, S290, and S292 each carry phosphoserine. Residues 303 to 327 (RSQERRVEEEKRGSVSRGRSQEKSL) are compositionally biased toward basic and acidic residues. Basic residues-rich tracts occupy residues 328–359 (RQSR…GRKR) and 367–382 (RSRS…KRGS). Basic and acidic residues predominate over residues 411–431 (VSKEREHAKSESSQREGRGES). Phosphoserine occurs at positions 431, 446, 456, 458, and 460. Residues 449–460 (KSKPNLPSESRS) are compositionally biased toward low complexity. Residues 461 to 494 (RSKSASKTRSRSKSRSRSASRSPSRSRSRSHSRS) show a composition bias toward basic residues.

The protein belongs to the splicing factor SR family. In terms of assembly, found in a pre-mRNA splicing complex with SRSF4/SFRS4, SRSF5/SFRS5, SNRNP70, SNRPA1, SRRM1 and SRRM2. Interacts with PNN. In terms of processing, extensively phosphorylated on serine residues in the RS domain.

The protein localises to the nucleus speckle. Functionally, plays a role in alternative splice site selection during pre-mRNA splicing. Represses the splicing of MAPT/Tau exon 10. The protein is Serine/arginine-rich splicing factor 4 (SRSF4) of Homo sapiens (Human).